Consider the following 308-residue polypeptide: Cytochrome b (308 aa).

The next 4 membrane-spanning stretches (helical) occupy residues 1–21 (FGSLLGICLMTQIITGLLMAM), 45–66 (WLIRNLHANGASMFFICIYLHI), 81–101 (WNTGVILLLTLMATAFVGYVL), and 146–166 (FFALHFLLPFMIAGLTFIHLT). Residues H51 and H65 each contribute to the heme b site. 2 residues coordinate heme b: H150 and H164. H169 is an a ubiquinone binding site. Transmembrane regions (helical) follow at residues 194–214 (TKDILGFLAMLVPLTALAMFS), 256–276 (LGGVLALAASVLILFLIPFLH), and 288–308 (LSQLLFWILVTNLLILTWVGS).

Belongs to the cytochrome b family. The cytochrome bc1 complex contains 11 subunits: 3 respiratory subunits (MT-CYB, CYC1 and UQCRFS1), 2 core proteins (UQCRC1 and UQCRC2) and 6 low-molecular weight proteins (UQCRH/QCR6, UQCRB/QCR7, UQCRQ/QCR8, UQCR10/QCR9, UQCR11/QCR10 and a cleavage product of UQCRFS1). This cytochrome bc1 complex then forms a dimer. Requires heme b as cofactor.

It localises to the mitochondrion inner membrane. Component of the ubiquinol-cytochrome c reductase complex (complex III or cytochrome b-c1 complex) that is part of the mitochondrial respiratory chain. The b-c1 complex mediates electron transfer from ubiquinol to cytochrome c. Contributes to the generation of a proton gradient across the mitochondrial membrane that is then used for ATP synthesis. The chain is Cytochrome b (MT-CYB) from Asthenes dorbignyi (Creamy-breasted canastero).